The sequence spans 135 residues: Small ribosomal subunit protein uS12 (135 aa).

Asp89 is subject to 3-methylthioaspartic acid. The disordered stretch occupies residues 108 to 135 (NKRTVSRSKYGTKKAKATDKKATDNKKK). The span at 111 to 122 (TVSRSKYGTKKA) shows a compositional bias: basic residues. Residues 123–135 (KATDKKATDNKKK) are compositionally biased toward basic and acidic residues.

This sequence belongs to the universal ribosomal protein uS12 family. As to quaternary structure, part of the 30S ribosomal subunit. Contacts proteins S8 and S17. May interact with IF1 in the 30S initiation complex.

Its function is as follows. With S4 and S5 plays an important role in translational accuracy. In terms of biological role, interacts with and stabilizes bases of the 16S rRNA that are involved in tRNA selection in the A site and with the mRNA backbone. Located at the interface of the 30S and 50S subunits, it traverses the body of the 30S subunit contacting proteins on the other side and probably holding the rRNA structure together. The combined cluster of proteins S8, S12 and S17 appears to hold together the shoulder and platform of the 30S subunit. This chain is Small ribosomal subunit protein uS12, found in Helicobacter pylori (strain P12).